The primary structure comprises 251 residues: Endoglucanase CX (251 aa).

The protein belongs to the glycosyl hydrolase 9 (cellulase E) family.

It catalyses the reaction Endohydrolysis of (1-&gt;4)-beta-D-glucosidic linkages in cellulose, lichenin and cereal beta-D-glucans.. Degrades carboxymethylcellulose (CMC). In Prunus persica (Peach), this protein is Endoglucanase CX.